We begin with the raw amino-acid sequence, 312 residues long: 2-phospho-L-lactate transferase (312 aa).

Positions 50 and 89 each coordinate 7,8-didemethyl-8-hydroxy-5-deazariboflavin.

The protein belongs to the CofD family. Homodimer. Mg(2+) is required as a cofactor.

It catalyses the reaction (2S)-lactyl-2-diphospho-5'-guanosine + 7,8-didemethyl-8-hydroxy-5-deazariboflavin = oxidized coenzyme F420-0 + GMP + H(+). The protein operates within cofactor biosynthesis; coenzyme F420 biosynthesis. Catalyzes the transfer of the 2-phospholactate moiety from (2S)-lactyl-2-diphospho-5'-guanosine to 7,8-didemethyl-8-hydroxy-5-deazariboflavin (FO) with the formation of oxidized coenzyme F420-0 and GMP. This is 2-phospho-L-lactate transferase from Methanococcus vannielii (strain ATCC 35089 / DSM 1224 / JCM 13029 / OCM 148 / SB).